Here is a 565-residue protein sequence, read N- to C-terminus: DNA ligase B (565 aa).

Lys-130 functions as the N6-AMP-lysine intermediate in the catalytic mechanism.

The protein belongs to the NAD-dependent DNA ligase family. LigB subfamily.

It carries out the reaction NAD(+) + (deoxyribonucleotide)n-3'-hydroxyl + 5'-phospho-(deoxyribonucleotide)m = (deoxyribonucleotide)n+m + AMP + beta-nicotinamide D-nucleotide.. Catalyzes the formation of phosphodiester linkages between 5'-phosphoryl and 3'-hydroxyl groups in double-stranded DNA using NAD as a coenzyme and as the energy source for the reaction. This is DNA ligase B from Yersinia enterocolitica serotype O:8 / biotype 1B (strain NCTC 13174 / 8081).